A 251-amino-acid chain; its full sequence is Ribonuclease PH (251 aa).

Phosphate-binding positions include R87 and 125 to 127 (GTR).

The protein belongs to the RNase PH family. In terms of assembly, homohexameric ring arranged as a trimer of dimers.

It catalyses the reaction tRNA(n+1) + phosphate = tRNA(n) + a ribonucleoside 5'-diphosphate. Functionally, phosphorolytic 3'-5' exoribonuclease that plays an important role in tRNA 3'-end maturation. Removes nucleotide residues following the 3'-CCA terminus of tRNAs; can also add nucleotides to the ends of RNA molecules by using nucleoside diphosphates as substrates, but this may not be physiologically important. Probably plays a role in initiation of 16S rRNA degradation (leading to ribosome degradation) during starvation. This chain is Ribonuclease PH, found in Saccharopolyspora erythraea (strain ATCC 11635 / DSM 40517 / JCM 4748 / NBRC 13426 / NCIMB 8594 / NRRL 2338).